Here is a 301-residue protein sequence, read N- to C-terminus: Phosphate butyryltransferase (301 aa).

Belongs to the phosphate acetyltransferase and butyryltransferase family.

It carries out the reaction butanoyl-CoA + phosphate = butanoyl phosphate + CoA. It participates in lipid metabolism; butanoate metabolism. Its function is as follows. Catalyzes the conversion of butyryl-CoA through butyryl phosphate to butyrate. This is Phosphate butyryltransferase (ptb) from Clostridium acetobutylicum (strain ATCC 824 / DSM 792 / JCM 1419 / IAM 19013 / LMG 5710 / NBRC 13948 / NRRL B-527 / VKM B-1787 / 2291 / W).